An 852-amino-acid chain; its full sequence is Disrupted in schizophrenia 1 homolog (852 aa).

Disordered stretches follow at residues 1-86 (MQGG…GLDP), 236-264 (EAEPLHQRPQEMAAEASSSDRPHGDPRHL), and 280-320 (QVTR…QGGG). Positions 1 to 294 (MQGGGPRGAP…SSRQSECGTV (294 aa)) are interaction with MAP1A. Polar residues predominate over residues 65 to 79 (AGLTGQQSQHSQSKA). Basic and acidic residues predominate over residues 253-263 (SSDRPHGDPRH). Over residues 288 to 311 (QSECGTVSSSSSDTGFSSQDASSA) the composition is skewed to low complexity. An interaction with TRAF3IP1 region spans residues 295–693 (SSSSSDTGFS…LGRVWKADLE (399 aa)). Coiled-coil stretches lie at residues 367 to 397 (EDGDYDTAETLRQRLEELEQEKGRLSWALPS) and 449 to 496 (ITRR…LLRW). The interval 437-594 (LRTTAQDSLP…LLEAKMLALS (158 aa)) is required for localization to punctate cytoplasmic foci. Positions 443-852 (DSLPASITRR…PTAGAQETEA (410 aa)) are necessary and sufficient for interaction with PCNT and localization at the centrosome. Residues 595 to 852 (GSCFSTAKEL…PTAGAQETEA (258 aa)) are interaction with ATF4 and ATF5. Disordered regions lie at residues 706–746 (EAGS…KSPL) and 833–852 (KEAGEASASYPTAGAQETEA). The tract at residues 728 to 852 (TAALAVPRTP…PTAGAQETEA (125 aa)) is interaction with NDEL1 and PAFAH1B1. The segment at 728-852 (TAALAVPRTP…PTAGAQETEA (125 aa)) is interaction with PAFAH1B1. The segment at 802-835 (SHDEALFQSLQGELQTVKETLQAMILQLQPTKEA) is interaction with NDEL1.

As to quaternary structure, interacts with NDEL1. Interacts with CCDC88A (via C-terminus); the interaction is direct. Interacts with GSK3B. Interacts with tubulin alpha, ACTN2, ANKHD1, ATF4, ATF5, CEP63, EIF3S3, MAP1A, NDEL1, PAFAH1B1, RANBP9, SPTBN4, SYNE1 and TRAF3IP1. Interaction with microtubules may be mediated in part by TRAF3IP1. Interacts (via C-terminal) with PCNT. Interacts with CHCHD6. Interacts with CCDC141. Interacts with FBXW7, the substrate-recognition component of a SCF (SKP1-CUL1-F-box protein) E3 ubiquitin-protein ligase complex; the interaction targets DISC1 for proteasomal degradation. Interacts with ZNF365. Interacts with ATF4; inhibiting ATF4 transcription factor activity by disrupting ATF4 dimerization and DNA-binding. Interacts with PDE4B. Post-translationally, ubiquitinated. Ubiquitination with 'Lys-48'-linked polyubiquitin chains leads to its proteasomal degradation. As to expression, expressed in granule cell precursors within the dentate migratory stream during the first week of postnatal life and in differentiated granule cells of the hippocampus (at protein level). Detected in heart, brain, kidney, and testis. Expressed in dentate gyrus, hippocampus and in the olfactory bulb.

It localises to the cytoplasm. Its subcellular location is the cytoskeleton. It is found in the mitochondrion. The protein resides in the microtubule organizing center. The protein localises to the centrosome. It localises to the postsynaptic density. In terms of biological role, involved in the regulation of multiple aspects of embryonic and adult neurogenesis. Required for neural progenitor proliferation in the ventrical/subventrical zone during embryonic brain development and in the adult dentate gyrus of the hippocampus. Participates in the Wnt-mediated neural progenitor proliferation as a positive regulator by modulating GSK3B activity and CTNNB1 abundance. Plays a role as a modulator of the AKT-mTOR signaling pathway controlling the tempo of the process of newborn neurons integration during adult neurogenesis, including neuron positioning, dendritic development and synapse formation. Inhibits the activation of AKT-mTOR signaling upon interaction with CCDC88A. Regulates the migration of early-born granule cell precursors toward the dentate gyrus during the hippocampal development. Inhibits ATF4 transcription factor activity in neurons by disrupting ATF4 dimerization and DNA-binding. Plays a role, together with PCNT, in the microtubule network formation. The polypeptide is Disrupted in schizophrenia 1 homolog (Mus musculus (Mouse)).